Here is a 344-residue protein sequence, read N- to C-terminus: MRNMITMGEFIVKKQADYPTATGELTSLLSSIRLAAKVVNREINKAGLADIIGSMGAENVQGEVQQKLDVYANERFKAALEARGEVCGMASEEEEDFVSFDSELSRHSKYVVLIDPLDGSSNIDVNVSVGTIFSIYRRVSKPGAGVTLEDFLQPGNRQVAAGYVVYGSSTMLVYTTGFGVNGFTYDPSIGCFCLSHENIRIPEEGKIYSINEGNYIKFPDGVKKYLKYCQERDEATHRPYTSRYIGSLVSDFHRNLLKGGIYIYPSGTNSPNGKLRLLYECNPMAFLVEQAGGKASDGFGRIMDIQPTALHQRTPYFVGSTKMVDRAEAFMREFSSHEDPANQG.

Mg(2+) is bound by residues E92, D115, L117, and D118. Substrate is bound by residues 118–121, N211, Y244, and K274; that span reads DGSS. E280 contacts Mg(2+).

Belongs to the FBPase class 1 family. As to quaternary structure, homotetramer. Mg(2+) is required as a cofactor.

The protein localises to the cytoplasm. The catalysed reaction is beta-D-fructose 1,6-bisphosphate + H2O = beta-D-fructose 6-phosphate + phosphate. Its pathway is carbohydrate biosynthesis; gluconeogenesis. In Aeromonas hydrophila subsp. hydrophila (strain ATCC 7966 / DSM 30187 / BCRC 13018 / CCUG 14551 / JCM 1027 / KCTC 2358 / NCIMB 9240 / NCTC 8049), this protein is Fructose-1,6-bisphosphatase class 1.